The sequence spans 540 residues: GMP synthase [glutamine-hydrolyzing] (540 aa).

Residues 26–216 (LIIILDFGSQ…VYHICDCEPT (191 aa)) form the Glutamine amidotransferase type-1 domain. The active-site Nucleophile is cysteine 103. Active-site residues include histidine 190 and glutamate 192. The region spanning 217 to 415 (WTTAAFVEEA…IGLPEEIVQR (199 aa)) is the GMPS ATP-PPase domain. 244 to 250 (SGGVDSS) is an ATP binding site.

Homodimer.

It catalyses the reaction XMP + L-glutamine + ATP + H2O = GMP + L-glutamate + AMP + diphosphate + 2 H(+). It functions in the pathway purine metabolism; GMP biosynthesis; GMP from XMP (L-Gln route): step 1/1. Catalyzes the synthesis of GMP from XMP. In Nostoc punctiforme (strain ATCC 29133 / PCC 73102), this protein is GMP synthase [glutamine-hydrolyzing].